Consider the following 193-residue polypeptide: CASP-like protein 1E1 (193 aa).

Residues 1–30 (MESQNKASLPVMDGLERRVVASQSEGASTC) lie on the Cytoplasmic side of the membrane. A helical transmembrane segment spans residues 31 to 51 (DLLLRVLALVLTLAAAIVLGV). Topologically, residues 52-86 (DKQTKVVPIKIVDTLPAINLPVSAKWHYLSAFTYS) are extracellular. Residues 87–107 (VASNAIACSYAALSLVLAVSG) form a helical membrane-spanning segment. The Cytoplasmic portion of the chain corresponds to 108–113 (KKGIMS). Residues 114–134 (IVIVLDLLMVAMLFSSNGAAL) form a helical membrane-spanning segment. The Extracellular segment spans residues 135–162 (AIGLMGYQGNSHVRWTKVCHVFGRFCNQ). The helical transmembrane segment at 163-183 (VAVSISLSLLGSILFLLLVGI) threads the bilayer. The Cytoplasmic segment spans residues 184-193 (TSLRLHKKSK).

This sequence belongs to the Casparian strip membrane proteins (CASP) family. As to quaternary structure, homodimer and heterodimers.

It localises to the cell membrane. In Populus trichocarpa (Western balsam poplar), this protein is CASP-like protein 1E1.